Consider the following 1318-residue polypeptide: MMSAGGTYISTASVEVPQALQDGEKFIRWDDDSGTGTPVTMRVDAKGFFLYWVDQNNELDILDIATIRDVRTGQYAKRPKDNKLRQIVTLGPQDTLEEKTVTVCHGSDFVNMTFVNFCCTRRDIAQLWTDGLIKLAYSLAQLNGSAIMFLQKAHTKLCLQVDKSGRIPVKNIIKLFAQNKEDRKRVEKALDVTGLPSGKVDSISVSKFQFEDFYNLYKYLTQRSEVERLFDSIVGNSKRKCMSIAQLVEFLNKTQRDPRLNEILYPYANPARAKELIQQYEPNKFNAQKGQLSLDGFLRYLMGDDNPIMAPSKLDLCDDMDQPMSHYFINSSHNTYLTGHQLTGKSSVEIYRQCLLAGCRCVELDFWNGRTEEPVIVHGYTFVPEIFAKDVLEAIAESAFKTSEYPVILSFENHCNPRQQAKIANYCREIFGDMLLDKPLDSHPLEPNMDLPPPAMLRRKIIIKNKKKHHHHHHHHHHKKPAQVGTPAANNKLTTANSVDAKAAQQVGLSASHEDGGVTRSTANGDVATGTGTGSAAGTAGHAPPLQQIRQSSKDSTGSSDSDSSSEDESLPNTTPNLPSGNEPPPEKAQKETEAGAEISALVNYVQPIHFSSFENAEKKNRCYEMSSFDEKQATTLLKERPIEFVNYNKHQLSRVYPAGTRFDSSNFMPQLFWNAGCQLVALNFQTLDLAMQLNLGIFEYNARSGYLLKPEFMRRSDRRLDPFAESTVDGIIAGTVSITVLSGQFLTDKRANTFVEVDMYGLPADTVRKKFRTKTVRDNGMNPLYDEEPFVFKKVVLPELASIRIAAYEEGGKLIGHRVLPVIGLCPGYRHVNLRSEVGQPIALASLFLCVVVKDYVPDDLSNFAEALANPIKYQSELEKRDIQLSVLTDEAEALGSADEDLSKSFVFVQVGGQKKELRPVESLATSPKHRPSISAAAAMSVDVTVDRTDGGRGEDSISIVAPSIQHQHSLDQSVSTSIRQVESSQFDVDLVLAEPLEKILDHKSVKEKRLEMEKKLESLRKKHDKEKIKIAGQKSSPLEGKKPKFAITNKLVKRLSNKSLNCLSPHSEPGVEIPACPLDLGDSSEESAAADAGEDLAGGSSSLDGRTQESRLRSACREYTSQYRELQEKYHEAIYSAAEKVLKTSQTGQTKQLKASLDKVTGEVMHQLQEARRNEVKNLATVHRDRDELIRMKREVASSVVERGVAERVRLKQTFDRRTDELQKQHDSVRNALAEHRSKARQILDKEAESRSCVSSNGFLVLFHGPHHHGCTGSGSSALSGNNLTLNLDAGAAGSHSAISPAKSHNSIAAAAEMKT.

A PI-PLC X-box domain is found at 318 to 466 (DDMDQPMSHY…LRRKIIIKNK (149 aa)). Active-site residues include H333 and H378. Substrate is bound by residues K464 and K466. The span at 466–481 (KKKHHHHHHHHHHKKP) shows a compositional bias: basic residues. Disordered regions lie at residues 466-489 (KKKHHHHHHHHHHKKPAQVGTPAA) and 505-594 (QQVG…KETE). 2 stretches are compositionally biased toward low complexity: residues 528-543 (ATGTGTGSAAGTAGHA) and 554-563 (KDSTGSSDSD). Polar residues predominate over residues 571–580 (LPNTTPNLPS). Over residues 585-594 (PPEKAQKETE) the composition is skewed to basic and acidic residues. One can recognise a PI-PLC Y-box domain in the interval 599–715 (ISALVNYVQP…GYLLKPEFMR (117 aa)). Positions 628 and 655 each coordinate substrate. Residues 715 to 843 (RRSDRRLDPF…NLRSEVGQPI (129 aa)) form the C2 domain. Disordered regions lie at residues 1080-1112 (LDLGDSSEESAAADAGEDLAGGSSSLDGRTQES) and 1296-1318 (GSHSAISPAKSHNSIAAAAEMKT). Residues 1088–1107 (ESAAADAGEDLAGGSSSLDG) show a composition bias toward low complexity.

Expressed in neuronal cell bodies of the optic lobe, central brain, and thoracic ganglia in adults, and the brain of larvae.

It catalyses the reaction a 1,2-diacyl-sn-glycero-3-phospho-(1D-myo-inositol-4,5-bisphosphate) + H2O = 1D-myo-inositol 1,4,5-trisphosphate + a 1,2-diacyl-sn-glycerol + H(+). Its function is as follows. The production of the second messenger molecules diacylglycerol (DAG) and inositol 1,4,5-trisphosphate (IP3) is mediated by activated phosphatidylinositol-specific phospholipase C enzymes. In Drosophila melanogaster (Fruit fly), this protein is 1-phosphatidylinositol 4,5-bisphosphate phosphodiesterase classes I and II (Plc21C).